Reading from the N-terminus, the 321-residue chain is Oxidoreductase P35 (321 aa).

This sequence belongs to the Gfo/Idh/MocA family.

It is found in the cell surface. Oxidoreductase that may be involved in ulvan degradation. Ulvan is the main polysaccharide component of the Ulvales (green seaweed) cell wall. It is composed of disaccharide building blocks comprising 3-sulfated rhamnose (Rha3S) linked to D-glucuronic acid (GlcA), L-iduronic acid (IduA), or D-xylose (Xyl). This Formosa agariphila (strain DSM 15362 / KCTC 12365 / LMG 23005 / KMM 3901 / M-2Alg 35-1) protein is Oxidoreductase P35.